The following is a 275-amino-acid chain: DNA polymerase II subunit B4 (275 aa).

A DNA-binding region spans residues L11–R17. Low complexity predominate over residues A112–K122. The interval A112–E275 is disordered. Positions K135–P142 match the Nuclear localization signal motif. The segment covering S151–D161 has biased composition (basic and acidic residues). Positions K152–D179 form a coiled coil. 2 stretches are compositionally biased toward acidic residues: residues E162–G237 and E266–E275.

This sequence belongs to the NFYB/HAP3 subunit family. As to quaternary structure, heterotrimeric transcription factor composed of three components, NF-YA, NF-YB and NF-YC. NF-YB and NF-YC must interact and dimerize for NF-YA association and DNA binding. Binds directly with DPB3-1.

The protein localises to the nucleus. In terms of biological role, component of the NF-Y/HAP transcription factor complex. The NF-Y complex stimulates the transcription of various genes by recognizing and binding to a CCAAT motif in promoters. This is DNA polymerase II subunit B4 from Arabidopsis thaliana (Mouse-ear cress).